We begin with the raw amino-acid sequence, 688 residues long: Translation initiation factor IF-2 (688 aa).

A compositionally biased stretch (basic and acidic residues) spans leucine 50–glutamate 62. The interval leucine 50 to asparagine 95 is disordered. Residues lysine 72 to lysine 82 show a composition bias toward low complexity. Basic and acidic residues predominate over residues lysine 86 to asparagine 95. The tr-type G domain occupies lysine 187–glutamate 354. The tract at residues glycine 196 to threonine 203 is G1. GTP is bound at residue glycine 196 to threonine 203. A G2 region spans residues glycine 221–histidine 225. Positions aspartate 242 to glycine 245 are G3. Residues aspartate 242–histidine 246 and asparagine 296–aspartate 299 contribute to the GTP site. The G4 stretch occupies residues asparagine 296 to aspartate 299. The G5 stretch occupies residues serine 332–histidine 334.

Belongs to the TRAFAC class translation factor GTPase superfamily. Classic translation factor GTPase family. IF-2 subfamily.

Its subcellular location is the cytoplasm. Functionally, one of the essential components for the initiation of protein synthesis. Protects formylmethionyl-tRNA from spontaneous hydrolysis and promotes its binding to the 30S ribosomal subunits. Also involved in the hydrolysis of GTP during the formation of the 70S ribosomal complex. The sequence is that of Translation initiation factor IF-2 from Clostridium botulinum (strain Langeland / NCTC 10281 / Type F).